Consider the following 636-residue polypeptide: Chaperone protein HtpG (636 aa).

An a; substrate-binding region spans residues 1–344 (MTLEADKQTH…SADLSLNVSR (344 aa)). The segment at 345-561 (EILQSGPVVD…EGDLGLQMRQ (217 aa)) is b. The interval 562–636 (LLEASGQKVP…LNKLLLELSA (75 aa)) is c.

This sequence belongs to the heat shock protein 90 family. Homodimer.

The protein resides in the cytoplasm. Its function is as follows. Molecular chaperone. Has ATPase activity. The polypeptide is Chaperone protein HtpG (Xylella fastidiosa (strain Temecula1 / ATCC 700964)).